The chain runs to 293 residues: Glutamyl-Q tRNA(Asp) synthetase (293 aa).

L-glutamate is bound by residues 9-13 (RFAPS) and Glu45. The 'HIGH' region signature appears at 12–22 (PSPSGELHFGS). Zn(2+) is bound by residues Cys101, Cys103, Tyr115, and Cys119. L-glutamate contacts are provided by Tyr172 and Arg190. A 'KMSKS' region motif is present at residues 228 to 232 (KLSKQ). An ATP-binding site is contributed by Lys231.

This sequence belongs to the class-I aminoacyl-tRNA synthetase family. GluQ subfamily. Zn(2+) is required as a cofactor.

Functionally, catalyzes the tRNA-independent activation of glutamate in presence of ATP and the subsequent transfer of glutamate onto a tRNA(Asp). Glutamate is transferred on the 2-amino-5-(4,5-dihydroxy-2-cyclopenten-1-yl) moiety of the queuosine in the wobble position of the QUC anticodon. The chain is Glutamyl-Q tRNA(Asp) synthetase from Klebsiella pneumoniae (strain 342).